A 284-amino-acid polypeptide reads, in one-letter code: Shikimate dehydrogenase (NADP(+)) (284 aa).

Shikimate is bound by residues 20 to 22 and serine 67; that span reads SIS. Lysine 71 serves as the catalytic Proton acceptor. Residue aspartate 83 participates in NADP(+) binding. Residues asparagine 92 and aspartate 107 each coordinate shikimate. Residues 129-133 and isoleucine 227 each bind NADP(+); that span reads GAGGA. Tyrosine 229 lines the shikimate pocket. Glycine 250 lines the NADP(+) pocket.

It belongs to the shikimate dehydrogenase family. Homodimer.

The enzyme catalyses shikimate + NADP(+) = 3-dehydroshikimate + NADPH + H(+). It participates in metabolic intermediate biosynthesis; chorismate biosynthesis; chorismate from D-erythrose 4-phosphate and phosphoenolpyruvate: step 4/7. In terms of biological role, involved in the biosynthesis of the chorismate, which leads to the biosynthesis of aromatic amino acids. Catalyzes the reversible NADPH linked reduction of 3-dehydroshikimate (DHSA) to yield shikimate (SA). The protein is Shikimate dehydrogenase (NADP(+)) of Streptococcus pneumoniae serotype 2 (strain D39 / NCTC 7466).